Consider the following 105-residue polypeptide: ATP synthase subunit c (105 aa).

Transmembrane regions (helical) follow at residues 37–57 and 82–102; these read IGAGITMVGGATVGLGQGYIF and SAISESSSIYSLLIAFILIFV.

This sequence belongs to the ATPase C chain family. In terms of assembly, F-type ATPases have 2 components, F(1) - the catalytic core - and F(0) - the membrane proton channel. F(1) has five subunits: alpha(3), beta(3), gamma(1), delta(1), epsilon(1). F(0) has three main subunits: a(1), b(2) and c(10-14). The alpha and beta chains form an alternating ring which encloses part of the gamma chain. F(1) is attached to F(0) by a central stalk formed by the gamma and epsilon chains, while a peripheral stalk is formed by the delta and b chains.

It is found in the cell membrane. In terms of biological role, f(1)F(0) ATP synthase produces ATP from ADP in the presence of a proton or sodium gradient. F-type ATPases consist of two structural domains, F(1) containing the extramembraneous catalytic core and F(0) containing the membrane proton channel, linked together by a central stalk and a peripheral stalk. During catalysis, ATP synthesis in the catalytic domain of F(1) is coupled via a rotary mechanism of the central stalk subunits to proton translocation. Functionally, key component of the F(0) channel; it plays a direct role in translocation across the membrane. A homomeric c-ring of between 10-14 subunits forms the central stalk rotor element with the F(1) delta and epsilon subunits. The polypeptide is ATP synthase subunit c (Mycoplasma pneumoniae (strain ATCC 29342 / M129 / Subtype 1) (Mycoplasmoides pneumoniae)).